The following is a 141-amino-acid chain: Large ribosomal subunit protein uL11 (141 aa).

Belongs to the universal ribosomal protein uL11 family. As to quaternary structure, part of the ribosomal stalk of the 50S ribosomal subunit. Interacts with L10 and the large rRNA to form the base of the stalk. L10 forms an elongated spine to which L12 dimers bind in a sequential fashion forming a multimeric L10(L12)X complex. One or more lysine residues are methylated.

Its function is as follows. Forms part of the ribosomal stalk which helps the ribosome interact with GTP-bound translation factors. This is Large ribosomal subunit protein uL11 from Streptococcus pneumoniae serotype 2 (strain D39 / NCTC 7466).